The chain runs to 217 residues: FGFR1 oncogene partner 2 homolog (217 aa).

2 coiled-coil regions span residues 6-106 (TIEK…MSKY) and 163-188 (KEQE…TRES). Residues 194–217 (KEDASESTSLSGLVTSSDLSLRKS) are disordered. Positions 199–217 (ESTSLSGLVTSSDLSLRKS) are enriched in polar residues.

This sequence belongs to the SIKE family.

The protein localises to the cytoplasm. The polypeptide is FGFR1 oncogene partner 2 homolog (FGFR1OP2) (Gallus gallus (Chicken)).